We begin with the raw amino-acid sequence, 593 residues long: 2-succinyl-5-enolpyruvyl-6-hydroxy-3-cyclohexene-1-carboxylate synthase (593 aa).

The protein belongs to the TPP enzyme family. MenD subfamily. Homodimer. It depends on Mg(2+) as a cofactor. The cofactor is Mn(2+). Thiamine diphosphate is required as a cofactor.

It carries out the reaction isochorismate + 2-oxoglutarate + H(+) = 5-enolpyruvoyl-6-hydroxy-2-succinyl-cyclohex-3-ene-1-carboxylate + CO2. Its pathway is quinol/quinone metabolism; 1,4-dihydroxy-2-naphthoate biosynthesis; 1,4-dihydroxy-2-naphthoate from chorismate: step 2/7. It functions in the pathway quinol/quinone metabolism; menaquinone biosynthesis. Functionally, catalyzes the thiamine diphosphate-dependent decarboxylation of 2-oxoglutarate and the subsequent addition of the resulting succinic semialdehyde-thiamine pyrophosphate anion to isochorismate to yield 2-succinyl-5-enolpyruvyl-6-hydroxy-3-cyclohexene-1-carboxylate (SEPHCHC). In Pelodictyon phaeoclathratiforme (strain DSM 5477 / BU-1), this protein is 2-succinyl-5-enolpyruvyl-6-hydroxy-3-cyclohexene-1-carboxylate synthase.